The primary structure comprises 103 residues: UPF0145 protein NT01CX_0170 (103 aa).

Belongs to the UPF0145 family.

The polypeptide is UPF0145 protein NT01CX_0170 (Clostridium novyi (strain NT)).